We begin with the raw amino-acid sequence, 102 residues long: Ribosomal silencing factor RsfS (102 aa).

The protein belongs to the Iojap/RsfS family. Interacts with ribosomal protein uL14 (rplN).

It localises to the cytoplasm. Functions as a ribosomal silencing factor. Interacts with ribosomal protein uL14 (rplN), blocking formation of intersubunit bridge B8. Prevents association of the 30S and 50S ribosomal subunits and the formation of functional ribosomes, thus repressing translation. The protein is Ribosomal silencing factor RsfS of Haemophilus influenzae (strain ATCC 51907 / DSM 11121 / KW20 / Rd).